A 388-amino-acid chain; its full sequence is Homeobox protein Hox-A13 (388 aa).

The homeobox DNA-binding region spans 322 to 381 (GRKKRVPYTKVQLKELEREYATNKFITKDKRRRISATTNLSERQVTIWFQNRRVKEKKVI).

This sequence belongs to the Abd-B homeobox family. As to quaternary structure, binds DNA as a homodimer. Interacts with MEIS1, MEIS2 and MEIS3.

It is found in the nucleus. Sequence-specific, AT-rich binding transcription factor which is part of a developmental regulatory system that provides cells with specific positional identities on the anterior-posterior axis. Functionally, sequence-specific transcription factor which is part of a developmental regulatory system that provides cells with specific positional identities on the anterior-posterior axis. The sequence is that of Homeobox protein Hox-A13 (HOXA13) from Homo sapiens (Human).